A 530-amino-acid chain; its full sequence is S-adenosylhomocysteine hydrolase-like protein 1 (530 aa).

Met1 is subject to N-acetylmethionine. At Ser2 the chain carries N-acetylserine. Residue Ser2 is modified to Phosphoserine. Lys40 is modified (N6-acetyllysine). Residues 53-103 (KFPTKTGRRSLSRSISQSSTDSYSSAASYTDSSDDEVSPREKQQTNSKGSS) form a disordered region. The span at 64 to 83 (SRSISQSSTDSYSSAASYTD) shows a compositional bias: low complexity. The PEST stretch occupies residues 65–92 (RSISQSSTDSYSSAASYTDSSDDEVSPR). Ser68, Ser71, Ser74, Ser77, and Ser84 each carry phosphoserine. The interval 138–201 (QGEKPLAGAK…EAGVAVFAWK (64 aa)) is interaction with BCL2L10. Thr155, Asp229, Glu254, Lys284, and Asp288 together coordinate substrate. The tract at residues 281 to 448 (SVTKQKFDNL…EGRLLNLSCS (168 aa)) is NAD binding. Residues 318–322 (GYGEV), Glu341, and Asn376 each bind NAD(+). Phosphoserine is present on Ser391. 397–399 (MGH) serves as a coordination point for NAD(+). Residues 520 to 530 (NGPFKPNYYRY) are PDZ-binding.

Belongs to the adenosylhomocysteinase family. Forms multimers. Forms heteromultimers with AHCYL2 (via the C-terminal region). Interacts (when phosphorylated) with ITPR1 (when not phosphorylated); the interaction suppresses inositol 1,4,5-trisphosphate binding to ITPR1. Interacts with BCL2L10; this strengthens the interaction of AHCYL1 with ITPR1. Interacts with CFTR and SLC26A6; the interactions take place once AHCYL1 is released from ITPR1 and increase CFTR and SLC26A6 activities. Interacts with RRM1; in a phosphorylation- and (dATP)-dependent manner. Interacts (via PEST domain when phosphorylated) with SLC4A4 isoform 1 but not isoform 2; the interaction increases SLC4A4 isoform 1 activity. Interacts (when phosphorylated) with SLC9A3; the interaction is required for SLC9A3 apical location and activity. Interacts (when phosphorylated) with FIP1L1; the interaction is direct and associates AHCYL1 with the CPSF complex and RNA. Interacts with PAPOLA. Interacts with ZCCHC4. Interacts with AHCY. Requires NAD(+) as cofactor. Phosphorylated at Ser/Thr residues between Ser-68 and Thr-72 in the PEST region: required for interaction with dATP-bound RRM1 and ITPR1. Phosphorylation at Ser-68 by PRKD1 and CAMK4 is required for further phosphorylations by CSNK1A1. Phosphorylation is induced by oxidative stress. Probably phosphorylated by CAMK2A; phosphorylation at Ser-68 may be required for interaction with SLC9A3. Dephosphorylated in response to apoptotic stress conditions which causes translocation of both AHCYL1 and BCL2L10 from mitochondria-associated endoplasmic reticulum membranes and promotes apoptosis. As to expression, expressed in dendritic cells.

It localises to the endoplasmic reticulum. Its subcellular location is the cytoplasm. The protein resides in the cytosol. It is found in the apical cell membrane. The protein localises to the microsome. Its function is as follows. Multifaceted cellular regulator which coordinates several essential cellular functions including regulation of epithelial HCO3(-) and fluid secretion, mRNA processing and DNA replication. Regulates ITPR1 sensitivity to inositol 1,4,5-trisphosphate, competing for the common binding site and acting as endogenous 'pseudoligand' whose inhibitory activity can be modulated by its phosphorylation status. Promotes the formation of contact points between the endoplasmic reticulum (ER) and mitochondria, facilitating transfer of Ca(2+) from the ER to mitochondria. Under normal cellular conditions, functions cooperatively with BCL2L10 to limit ITPR1-mediated Ca(2+) release but, under apoptotic stress conditions, dephosphorylated which promotes dissociation of both AHCYL1 and BCL2L10 from mitochondria-associated endoplasmic reticulum membranes, inhibits BCL2L10 interaction with ITPR1 and leads to increased Ca(2+) transfer to mitochondria which promotes apoptosis. In the pancreatic and salivary ducts, at resting state, attenuates inositol 1,4,5-trisphosphate-induced calcium release by interacting with ITPR1. When extracellular stimuli induce ITPR1 phosphorylation or inositol 1,4,5-trisphosphate production, dissociates from ITPR1 to interact with CFTR and SLC26A6, mediating their synergistic activation by calcium and cAMP that stimulates the epithelial secretion of electrolytes and fluid. Also activates basolateral SLC4A4 isoform 1 to coordinate fluid and HCO3(-) secretion. Inhibits the effect of STK39 on SLC4A4 and CFTR by recruiting PP1 phosphatase which activates SLC4A4, SLC26A6 and CFTR through dephosphorylation. Mediates the induction of SLC9A3 surface expression produced by Angiotensin-2. Depending on the cell type, activates SLC9A3 in response to calcium or reverses SLC9A3R2-dependent calcium inhibition. May modulate the polyadenylation state of specific mRNAs, both by controlling the subcellular location of FIP1L1 and by inhibiting PAPOLA activity, in response to a stimulus that alters its phosphorylation state. Acts as a (dATP)-dependent inhibitor of ribonucleotide reductase large subunit RRM1, controlling the endogenous dNTP pool and ensuring normal cell cycle progression. In vitro does not exhibit any S-adenosyl-L-homocysteine hydrolase activity. The sequence is that of S-adenosylhomocysteine hydrolase-like protein 1 from Homo sapiens (Human).